The sequence spans 653 residues: NADH-ubiquinone oxidoreductase chain 5 (653 aa).

Transmembrane regions (helical) follow at residues 1–21 (MYLVIIFLPLLGSIISGFFGR), 30–50 (LITSSFIIITTMLAIFNFFEV), 81–103 (LTVSMLIPVLIVSSLVHIYSIGY), 120–140 (FTFMMIILVTANNYLLMFLGV), 177–197 (FLTIGMFIIIWSFGNLDYSTV), 200–220 (LAPYFNQEFITLIGICLLIGA), 241–261 (TPVSALIHAATMVTAGVYLLM), 274–294 (LILCLWLGAITTIFSSIIGLF), 301–319 (VIAYSTMSQLGMMVIAIGL), 331–351 (NHAFYKALLFLGAGAVIHSVS), 365–385 (FLPLAYSIMLIASLSLVAIPF), 403–423 (FYISSTLVYFIATIGAMFTTL), 452–472 (IFINLPLIILAIFSIFFGYLT), 511–531 (LLPLFFTITLSIIGIMFSEFF), 610–630 (GVITSYALYILIGLIFYVFLL), and 631–651 (YLNIDNNILLLLLFGIFSTIN).

Belongs to the complex I subunit 5 family.

Its subcellular location is the mitochondrion inner membrane. The enzyme catalyses a ubiquinone + NADH + 5 H(+)(in) = a ubiquinol + NAD(+) + 4 H(+)(out). Its function is as follows. Core subunit of the mitochondrial membrane respiratory chain NADH dehydrogenase (Complex I) that is believed to belong to the minimal assembly required for catalysis. Complex I functions in the transfer of electrons from NADH to the respiratory chain. The immediate electron acceptor for the enzyme is believed to be ubiquinone. This is NADH-ubiquinone oxidoreductase chain 5 (ND5) from Trichophyton rubrum (Athlete's foot fungus).